The primary structure comprises 378 residues: Ribosomal RNA large subunit methyltransferase G (378 aa).

This sequence belongs to the methyltransferase superfamily. RlmG family.

The protein localises to the cytoplasm. The catalysed reaction is guanosine(1835) in 23S rRNA + S-adenosyl-L-methionine = N(2)-methylguanosine(1835) in 23S rRNA + S-adenosyl-L-homocysteine + H(+). Specifically methylates the guanine in position 1835 (m2G1835) of 23S rRNA. In Shigella flexneri, this protein is Ribosomal RNA large subunit methyltransferase G.